The primary structure comprises 172 residues: RNA silencing suppressor p19 (172 aa).

Residues 1–15 (MERAIQGNDAREQAY) show a composition bias toward basic and acidic residues. A disordered region spans residues 1–38 (MERAIQGNDAREQAYGERWNGGPGGSTSPFQLPDESPS).

This sequence belongs to the tombusvirus protein p19 family. As to quaternary structure, homodimer.

Viral suppressor of RNA silencing which binds specifically to silencing RNAs (siRNAs). Acts as a molecular caliper to specifically select siRNAs based on the length of the duplex region of the RNA. The sequence is that of RNA silencing suppressor p19 from Tomato bushy stunt virus (strain A23) (TBSV).